A 105-amino-acid polypeptide reads, in one-letter code: Phosphoribosyl-ATP pyrophosphatase (105 aa).

This sequence belongs to the PRA-PH family.

Its subcellular location is the cytoplasm. It carries out the reaction 1-(5-phospho-beta-D-ribosyl)-ATP + H2O = 1-(5-phospho-beta-D-ribosyl)-5'-AMP + diphosphate + H(+). Its pathway is amino-acid biosynthesis; L-histidine biosynthesis; L-histidine from 5-phospho-alpha-D-ribose 1-diphosphate: step 2/9. The chain is Phosphoribosyl-ATP pyrophosphatase from Ruegeria sp. (strain TM1040) (Silicibacter sp.).